The sequence spans 76 residues: Large ribosomal subunit protein uL29 (76 aa).

The protein belongs to the universal ribosomal protein uL29 family.

The polypeptide is Large ribosomal subunit protein uL29 (Corynebacterium kroppenstedtii (strain DSM 44385 / JCM 11950 / CIP 105744 / CCUG 35717)).